Reading from the N-terminus, the 99-residue chain is Ferredoxin, heterocyst (99 aa).

Residues 4 to 96 enclose the 2Fe-2S ferredoxin-type domain; the sequence is YQVRLINKKE…NCTIKTHQEP (93 aa). The [2Fe-2S] cluster site is built by Cys-42, Cys-47, Cys-50, and Cys-80.

The protein belongs to the 2Fe2S plant-type ferredoxin family. [2Fe-2S] cluster is required as a cofactor.

In terms of biological role, ferredoxins are iron-sulfur proteins that transfer electrons in a wide variety of metabolic reactions. In Microchaete diplosiphon (Fremyella diplosiphon), this protein is Ferredoxin, heterocyst (fdxH).